Consider the following 141-residue polypeptide: MRHKLGQRKLGRTSSHRIALLRNMAAALIKHEQITTTLPKARELRPYLEKLITLGKKGGLSNRRLAHARLLDEAQEQKLFTTLAERYADRNGGYTRIIKAGYRASDAAPLAVIELVDRDTSAKGQDSGPVLTADEDEFEAA.

A disordered region spans residues 120–141; the sequence is TSAKGQDSGPVLTADEDEFEAA.

This sequence belongs to the bacterial ribosomal protein bL17 family. Part of the 50S ribosomal subunit. Contacts protein L32.

The chain is Large ribosomal subunit protein bL17 from Novosphingobium aromaticivorans (strain ATCC 700278 / DSM 12444 / CCUG 56034 / CIP 105152 / NBRC 16084 / F199).